A 280-amino-acid polypeptide reads, in one-letter code: Probable N-acetyltransferase 14 (280 aa).

2 helical membrane passes run 37–57 (LILH…LSSI) and 60–80 (CVLH…VIYL). Residues 111–152 (PDLPNPHLGRAKLTTNQEKTRRRKKAKEKEKMNESEQVDEDE) are disordered. In terms of domain architecture, N-acetyltransferase spans 116–273 (PHLGRAKLTT…EKGWLGYPLT (158 aa)).

This sequence belongs to the camello family.

The protein resides in the membrane. Functionally, probable acetyltransferase. This chain is Probable N-acetyltransferase 14 (nat14), found in Danio rerio (Zebrafish).